Here is a 160-residue protein sequence, read N- to C-terminus: Troponin C, skeletal muscle (160 aa).

Position 2 is an N-acetylthreonine (T2). EF-hand domains lie at 15 to 50 (EMIA…LGQT), 51 to 86 (PTKE…QMKE), 91 to 126 (KSEE…SGEH), and 127 to 160 (VTDE…EGVQ). Residues D28, D30, D34, E39, D64, D66, S68, T70, E75, D104, N106, D108, Y110, E115, D140, N142, D144, R146, and E151 each contribute to the Ca(2+) site.

The protein belongs to the troponin C family.

Functionally, troponin is the central regulatory protein of striated muscle contraction. Tn consists of three components: Tn-I which is the inhibitor of actomyosin ATPase, Tn-T which contains the binding site for tropomyosin and Tn-C. The binding of calcium to Tn-C abolishes the inhibitory action of Tn on actin filaments. In Homo sapiens (Human), this protein is Troponin C, skeletal muscle (TNNC2).